A 37-amino-acid chain; its full sequence is Small ribosomal subunit protein eS32 (37 aa).

It belongs to the eukaryotic ribosomal protein eS32 family. In terms of assembly, part of the small ribosomal subunit.

This chain is Small ribosomal subunit protein eS32, found in Pyrococcus furiosus (strain ATCC 43587 / DSM 3638 / JCM 8422 / Vc1).